The following is a 264-amino-acid chain: MKAEATVIPSRCARGQTTAAPGVQPWQTSVPQNTTQPKLLAPRQHEKSQKRSSLLKELGAFHITIALLHLVFGGYLASTVKSLHLVVLKSWYPFWGAASFLISGILAITMKTFSKTYLKMLCLMTNLVSLFCVLSGLFVISKDLFLESPFESPIWRMYPNSTVHIQRLELALLCFTVLELFLPVPTAVTAWRDRPSAKNDDACLLPNTPSHLKGLPVEPPPSYQSVIQGDAQHKQHQRLREVKQVTPDTWIVTDGAGIWTQTAN.

Over 1 to 57 (MKAEATVIPSRCARGQTTAAPGVQPWQTSVPQNTTQPKLLAPRQHEKSQKRSSLLKE) the chain is Cytoplasmic. Over residues 17–37 (TTAAPGVQPWQTSVPQNTTQP) the composition is skewed to polar residues. Positions 17–48 (TTAAPGVQPWQTSVPQNTTQPKLLAPRQHEKS) are disordered. Residues 58–78 (LGAFHITIALLHLVFGGYLAS) traverse the membrane as a helical segment. At 79 to 89 (TVKSLHLVVLK) the chain is on the extracellular side. The chain crosses the membrane as a helical span at residues 90-110 (SWYPFWGAASFLISGILAITM). Residues 111–119 (KTFSKTYLK) are Cytoplasmic-facing. Residues 120–140 (MLCLMTNLVSLFCVLSGLFVI) traverse the membrane as a helical segment. Residues 141 to 169 (SKDLFLESPFESPIWRMYPNSTVHIQRLE) are Extracellular-facing. The helical transmembrane segment at 170-190 (LALLCFTVLELFLPVPTAVTA) threads the bilayer. The Cytoplasmic segment spans residues 191–264 (WRDRPSAKND…GAGIWTQTAN (74 aa)).

It belongs to the MS4A family.

It localises to the membrane. Functionally, may be involved in signal transduction as a component of a multimeric receptor complex. In Pongo abelii (Sumatran orangutan), this protein is Membrane-spanning 4-domains subfamily A member 10 (MS4A10).